Reading from the N-terminus, the 852-residue chain is RNA-binding protein 10 (852 aa).

Basic and acidic residues-rich tracts occupy residues 1–14 and 21–45; these read MEYE…DRTG and RSQD…RSYP. The tract at residues 1-78 is disordered; sequence MEYERRGGRG…RGQLQSHGVQ (78 aa). One can recognise an RRM 1 domain in the interval 37-132; that stretch reads RDMDYRSYPR…QKVSMHYSDP (96 aa). S61 carries the post-translational modification Phosphoserine. The RanBP2-type zinc-finger motif lies at 135 to 165; it reads KINEDWLCNKCGVQNFKRREKCFKCGVPKSE. The RRM 2 domain occupies 223–307; that stretch reads DTIILRNLNP…KTINVEFAKG (85 aa). An N6-acetyllysine modification is found at K306. Disordered regions lie at residues 343 to 365, 386 to 410, 426 to 446, 459 to 489, 542 to 568, and 634 to 675; these read GGES…QQDE, KGPG…EGGT, APGL…ATNS, SELQ…YPVP, EQSA…HKTK, and DLPK…EEKL. Residues 430 to 446 are compositionally biased toward polar residues; the sequence is YQQSAEGSSGQGTATNS. Positions 463-484 are enriched in low complexity; it reads SPTHPSSALPPATSPTAPESYS. Positions 545-561 are enriched in basic and acidic residues; that stretch reads ADGHKDTGASSKEGKEK. Phosphoserine is present on residues S640, S645, S655, S658, and S660. Basic and acidic residues predominate over residues 665–675; sequence ERGGPEREEKL. The C2H2-type; atypical zinc-finger motif lies at 681–706; the sequence is LACLLCRRQFPSKEALIRHQQLSGLH. Phosphoserine is present on residues S703, S719, and S767. A disordered region spans residues 740 to 783; sequence AAERREKYGIPEPPEPKRRKYGGISTASVDFEQPTRDGLGSDNI. The G-patch domain maps to 780 to 826; the sequence is SDNIGSRMLQAMGWKEGSGLGRKKQGIVTPIEAQTRVRGSGLGARGS. An Omega-N-methylarginine modification is found at R824.

Associates with the spliceosome. Component of a large chromatin remodeling complex, at least composed of MYSM1, PCAF, RBM10 and KIF11/TRIP5.

It is found in the nucleus. Its function is as follows. Binds to ssRNA containing the consensus sequence 5'-AGGUAA-3'. May be involved in post-transcriptional processing, most probably in mRNA splicing. Binds to RNA homopolymers, with a preference for poly(G) and poly(U) and little for poly(A). May bind to specific miRNA hairpins. This Rattus norvegicus (Rat) protein is RNA-binding protein 10.